The following is a 112-amino-acid chain: Putative pterin-4-alpha-carbinolamine dehydratase (112 aa).

It belongs to the pterin-4-alpha-carbinolamine dehydratase family.

The catalysed reaction is (4aS,6R)-4a-hydroxy-L-erythro-5,6,7,8-tetrahydrobiopterin = (6R)-L-erythro-6,7-dihydrobiopterin + H2O. This chain is Putative pterin-4-alpha-carbinolamine dehydratase, found in Vibrio parahaemolyticus serotype O3:K6 (strain RIMD 2210633).